A 96-amino-acid chain; its full sequence is MVSATRSLLCAALPVLATSRQATGAPVANELRCQCLQTVAGIHFKNIQSLKVMPPGPHCTQTEVIATLKNGREACLDPEAPMVQKIVQKMLKGVPK.

An N-terminal signal peptide occupies residues 1–24 (MVSATRSLLCAALPVLATSRQATG). Intrachain disulfides connect cysteine 33-cysteine 59 and cysteine 35-cysteine 75.

Belongs to the intercrine alpha (chemokine CxC) family. In terms of assembly, monomer and homodimer. At least expressed in the lung and trachea.

The protein localises to the secreted. In terms of biological role, has chemotactic activity for neutrophils. Contributes to neutrophil activation during inflammation. This chain is Growth-regulated alpha protein (Cxcl1), found in Rattus norvegicus (Rat).